Here is a 67-residue protein sequence, read N- to C-terminus: Large ribosomal subunit protein uL29 (67 aa).

This sequence belongs to the universal ribosomal protein uL29 family.

In Methanosarcina mazei (strain ATCC BAA-159 / DSM 3647 / Goe1 / Go1 / JCM 11833 / OCM 88) (Methanosarcina frisia), this protein is Large ribosomal subunit protein uL29.